A 600-amino-acid chain; its full sequence is Probable translation initiation factor IF-2 (600 aa).

The tr-type G domain maps to 10-227 (LRQPIVVVLG…LLAGLTQRYL (218 aa)). The G1 stretch occupies residues 19 to 26 (GHVDHGKT). 19–26 (GHVDHGKT) contacts GTP. The interval 44-48 (EMTQE) is G2. Positions 83–86 (DTPG) are G3. Residues 83 to 87 (DTPGH) and 137 to 140 (NKID) each bind GTP. The interval 137-140 (NKID) is G4. A G5 region spans residues 205–207 (SAK).

Belongs to the TRAFAC class translation factor GTPase superfamily. Classic translation factor GTPase family. IF-2 subfamily.

Function in general translation initiation by promoting the binding of the formylmethionine-tRNA to ribosomes. Seems to function along with eIF-2. The polypeptide is Probable translation initiation factor IF-2 (Saccharolobus solfataricus (strain ATCC 35092 / DSM 1617 / JCM 11322 / P2) (Sulfolobus solfataricus)).